A 61-amino-acid polypeptide reads, in one-letter code: MAKKSMIAKQKRTPKFKVQAYTRCERCGRPHSVYRKFKLCRICFRELAYKGQIPGVKKASW.

Positions 24, 27, 40, and 43 each coordinate Zn(2+).

This sequence belongs to the universal ribosomal protein uS14 family. Zinc-binding uS14 subfamily. As to quaternary structure, part of the 30S ribosomal subunit. Contacts proteins S3 and S10. Zn(2+) serves as cofactor.

Its function is as follows. Binds 16S rRNA, required for the assembly of 30S particles and may also be responsible for determining the conformation of the 16S rRNA at the A site. This Anoxybacillus flavithermus (strain DSM 21510 / WK1) protein is Small ribosomal subunit protein uS14.